Consider the following 452-residue polypeptide: Prephenate dehydrogenase [NADP(+)] (452 aa).

14–43 (KVIGIIGLGDMGLLYANKFTDAGWGVICCD) lines the NADP(+) pocket. Positions 14–297 (KVIGIIGLGD…GKHTGLLLLD (284 aa)) constitute a Prephenate/arogenate dehydrogenase domain.

It belongs to the prephenate/arogenate dehydrogenase family.

The enzyme catalyses prephenate + NADP(+) = 3-(4-hydroxyphenyl)pyruvate + CO2 + NADPH. The protein operates within amino-acid biosynthesis; L-tyrosine biosynthesis; (4-hydroxyphenyl)pyruvate from prephenate (NADP(+) route): step 1/1. The protein is Prephenate dehydrogenase [NADP(+)] (TYR1) of Saccharomyces cerevisiae (strain ATCC 204508 / S288c) (Baker's yeast).